Reading from the N-terminus, the 289-residue chain is Acetyl-coenzyme A carboxylase carboxyl transferase subunit beta (289 aa).

Residues 28–289 (VMTKCPKCKK…QGGGMAVWQS (262 aa)) enclose the CoA carboxyltransferase N-terminal domain. Cysteine 32, cysteine 35, cysteine 51, and cysteine 54 together coordinate Zn(2+). A C4-type zinc finger spans residues 32-54 (CPKCKKIMYTKELLKNLKVCVNC).

This sequence belongs to the AccD/PCCB family. As to quaternary structure, acetyl-CoA carboxylase is a heterohexamer composed of biotin carboxyl carrier protein (AccB), biotin carboxylase (AccC) and two subunits each of ACCase subunit alpha (AccA) and ACCase subunit beta (AccD). Zn(2+) is required as a cofactor.

The protein localises to the cytoplasm. It carries out the reaction N(6)-carboxybiotinyl-L-lysyl-[protein] + acetyl-CoA = N(6)-biotinyl-L-lysyl-[protein] + malonyl-CoA. It functions in the pathway lipid metabolism; malonyl-CoA biosynthesis; malonyl-CoA from acetyl-CoA: step 1/1. Functionally, component of the acetyl coenzyme A carboxylase (ACC) complex. Biotin carboxylase (BC) catalyzes the carboxylation of biotin on its carrier protein (BCCP) and then the CO(2) group is transferred by the transcarboxylase to acetyl-CoA to form malonyl-CoA. The chain is Acetyl-coenzyme A carboxylase carboxyl transferase subunit beta from Bacillus mycoides (strain KBAB4) (Bacillus weihenstephanensis).